The following is a 365-amino-acid chain: Flagellar P-ring protein (365 aa).

An N-terminal signal peptide occupies residues 1–20 (MKLPHFFVLAALVLSGAAHA).

This sequence belongs to the FlgI family. The basal body constitutes a major portion of the flagellar organelle and consists of four rings (L,P,S, and M) mounted on a central rod.

It localises to the periplasm. The protein localises to the bacterial flagellum basal body. In terms of biological role, assembles around the rod to form the L-ring and probably protects the motor/basal body from shearing forces during rotation. In Thiobacillus denitrificans (strain ATCC 25259 / T1), this protein is Flagellar P-ring protein.